Here is a 97-residue protein sequence, read N- to C-terminus: Citrate lyase acyl carrier protein (97 aa).

Serine 14 is modified (O-(phosphoribosyl dephospho-coenzyme A)serine).

It belongs to the CitD family. As to quaternary structure, oligomer with a subunit composition of (alpha,beta,gamma)6.

It is found in the cytoplasm. Covalent carrier of the coenzyme of citrate lyase. This Oenococcus oeni (strain ATCC BAA-331 / PSU-1) protein is Citrate lyase acyl carrier protein.